Here is a 169-residue protein sequence, read N- to C-terminus: uncharacterized protein (169 aa).

Positions 28–157 constitute a Nudix hydrolase domain; sequence ELHLVVHVCI…EFIPYFFLNQ (130 aa). The short motif at 65–87 is the Nudix box element; it reads AGSALKGETSRQAAEREVKEELG. 2 residues coordinate Mg(2+): Glu81 and Glu85.

The protein belongs to the Nudix hydrolase family. Requires Mg(2+) as cofactor.

This is an uncharacterized protein from Listeria innocua serovar 6a (strain ATCC BAA-680 / CLIP 11262).